The sequence spans 525 residues: 2,3-bisphosphoglycerate-independent phosphoglycerate mutase 2 (525 aa).

Mn(2+) contacts are provided by aspartate 14 and serine 64. Serine 64 functions as the Phosphoserine intermediate in the catalytic mechanism. Substrate contacts are provided by residues histidine 125, 155 to 156, arginine 187, arginine 193, 274 to 277, and lysine 347; these read RD and RADR. Mn(2+)-binding residues include aspartate 414, histidine 418, aspartate 455, histidine 456, and histidine 474.

It belongs to the BPG-independent phosphoglycerate mutase family. Requires Mn(2+) as cofactor.

It catalyses the reaction (2R)-2-phosphoglycerate = (2R)-3-phosphoglycerate. It functions in the pathway carbohydrate degradation; glycolysis; pyruvate from D-glyceraldehyde 3-phosphate: step 3/5. Its function is as follows. Catalyzes the interconversion of 2-phosphoglycerate and 3-phosphoglycerate. This is 2,3-bisphosphoglycerate-independent phosphoglycerate mutase 2 from Methanosarcina barkeri (strain Fusaro / DSM 804).